Reading from the N-terminus, the 441-residue chain is Ribosomal protein uS12 methylthiotransferase RimO (441 aa).

The 111-residue stretch at 7–117 folds into the MTTase N-terminal domain; it reads PKVSFVSLGC…VLDAVHRALP (111 aa). Residues cysteine 16, cysteine 52, cysteine 81, cysteine 148, cysteine 152, and cysteine 155 each contribute to the [4Fe-4S] cluster site. In terms of domain architecture, Radical SAM core spans 134–371; it reads LTPRHYAYLK…MARQQKISAR (238 aa). Residues 374-440 enclose the TRAM domain; sequence KRKVGTRQQV…AYDLHGSVAG (67 aa).

This sequence belongs to the methylthiotransferase family. RimO subfamily. Requires [4Fe-4S] cluster as cofactor.

It is found in the cytoplasm. The catalysed reaction is L-aspartate(89)-[ribosomal protein uS12]-hydrogen + (sulfur carrier)-SH + AH2 + 2 S-adenosyl-L-methionine = 3-methylsulfanyl-L-aspartate(89)-[ribosomal protein uS12]-hydrogen + (sulfur carrier)-H + 5'-deoxyadenosine + L-methionine + A + S-adenosyl-L-homocysteine + 2 H(+). Its function is as follows. Catalyzes the methylthiolation of an aspartic acid residue of ribosomal protein uS12. The sequence is that of Ribosomal protein uS12 methylthiotransferase RimO from Rhodopseudomonas palustris (strain BisB18).